The chain runs to 468 residues: Argininosuccinate lyase (468 aa).

This sequence belongs to the lyase 1 family. Argininosuccinate lyase subfamily.

It is found in the cytoplasm. The enzyme catalyses 2-(N(omega)-L-arginino)succinate = fumarate + L-arginine. The protein operates within amino-acid biosynthesis; L-arginine biosynthesis; L-arginine from L-ornithine and carbamoyl phosphate: step 3/3. This is Argininosuccinate lyase from Alkalilimnicola ehrlichii (strain ATCC BAA-1101 / DSM 17681 / MLHE-1).